A 375-amino-acid chain; its full sequence is Succinyl-diaminopimelate desuccinylase (375 aa).

H66 provides a ligand contact to Zn(2+). The active site involves D68. A Zn(2+)-binding site is contributed by D99. The Proton acceptor role is filled by E133. Zn(2+) contacts are provided by E134, E162, and H348.

The protein belongs to the peptidase M20A family. DapE subfamily. Homodimer. Requires Zn(2+) as cofactor. Co(2+) is required as a cofactor.

The enzyme catalyses N-succinyl-(2S,6S)-2,6-diaminopimelate + H2O = (2S,6S)-2,6-diaminopimelate + succinate. The protein operates within amino-acid biosynthesis; L-lysine biosynthesis via DAP pathway; LL-2,6-diaminopimelate from (S)-tetrahydrodipicolinate (succinylase route): step 3/3. In terms of biological role, catalyzes the hydrolysis of N-succinyl-L,L-diaminopimelic acid (SDAP), forming succinate and LL-2,6-diaminopimelate (DAP), an intermediate involved in the bacterial biosynthesis of lysine and meso-diaminopimelic acid, an essential component of bacterial cell walls. In Salmonella choleraesuis (strain SC-B67), this protein is Succinyl-diaminopimelate desuccinylase.